The chain runs to 284 residues: NH(3)-dependent NAD(+) synthetase (284 aa).

ATP is bound at residue 51 to 58 (GISGGIDS). Residue aspartate 57 participates in Mg(2+) binding. Arginine 148 contacts deamido-NAD(+). Position 168 (threonine 168) interacts with ATP. Glutamate 173 provides a ligand contact to Mg(2+). Lysine 181 and aspartate 188 together coordinate deamido-NAD(+). The ATP site is built by lysine 197 and threonine 219. 268 to 269 (HK) contributes to the deamido-NAD(+) binding site.

It belongs to the NAD synthetase family. In terms of assembly, homodimer.

The enzyme catalyses deamido-NAD(+) + NH4(+) + ATP = AMP + diphosphate + NAD(+) + H(+). It participates in cofactor biosynthesis; NAD(+) biosynthesis; NAD(+) from deamido-NAD(+) (ammonia route): step 1/1. In terms of biological role, catalyzes the ATP-dependent amidation of deamido-NAD to form NAD. Uses ammonia as a nitrogen source. In Burkholderia pseudomallei (strain 1106a), this protein is NH(3)-dependent NAD(+) synthetase.